The primary structure comprises 413 residues: Bestrophin homolog 13 (413 aa).

4 consecutive transmembrane segments (helical) span residues 29–49 (LIYL…IDLI), 72–92 (SYTR…NVVA), 236–256 (LVYT…TLFG), and 272–292 (LVVP…FKVG).

This sequence belongs to the anion channel-forming bestrophin (TC 1.A.46) family. Calcium-sensitive chloride channel subfamily. In terms of assembly, forms oligomers.

Its subcellular location is the cell membrane. Its function is as follows. Forms chloride channels. The polypeptide is Bestrophin homolog 13 (best-13) (Caenorhabditis elegans).